The chain runs to 148 residues: MSAKFIDKVKYFIGLDAFEDDNEDMLEEADGMDDEMIPISSTSKKNKILNIHTTTQMKVVIFEPSSFEEAPGIVDNLKNRKPVIINLENIEPDLAKKFFDFLNGAIYALDGNIQKVASGIFILAPNNVDISGNIKEELKNKGVFPWQK.

This sequence belongs to the SepF family. As to quaternary structure, homodimer. Interacts with FtsZ.

Its subcellular location is the cytoplasm. Cell division protein that is part of the divisome complex and is recruited early to the Z-ring. Probably stimulates Z-ring formation, perhaps through the cross-linking of FtsZ protofilaments. Its function overlaps with FtsA. This chain is Cell division protein SepF, found in Alkaliphilus metalliredigens (strain QYMF).